The primary structure comprises 575 residues: Interleukin-10 receptor subunit alpha (575 aa).

The first 16 residues, 1–16 (MLSRLLPFLVTISSLS), serve as a signal peptide directing secretion. The Extracellular segment spans residues 17 to 241 (LEFIAYGTEL…QYFTVTNLSI (225 aa)). Asparagine 50, asparagine 66, asparagine 113, and asparagine 182 each carry an N-linked (GlcNAc...) asparagine glycan. A disulfide bridge links cysteine 204 with cysteine 225. The N-linked (GlcNAc...) asparagine glycan is linked to asparagine 238. A helical transmembrane segment spans residues 242–262 (LVISMLLFCGILVCLVLQWYI). The Cytoplasmic segment spans residues 263 to 575 (RHPGKLPTVL…PLISSLQVEE (313 aa)). A phosphotyrosine mark is found at tyrosine 443 and tyrosine 493.

This sequence belongs to the type II cytokine receptor family. As to quaternary structure, interacts with IL10. Interacts with IL10RB. Interacts (via its cytoplasmic domain) with JAK1 (via N-terminus). Interacts with BTRC; this interaction leads to IL10RA ubiquitination and subsequent degradation. Interacts with STAT3. In terms of processing, phosphorylated. Phosphorylation of the cytoplasmic tail induced STAT3 activation. Post-translationally, ubiquitinated by BTRC; ubiquitination leads to endocytosis and subsequent degradation of IL10RA.

The protein localises to the cell membrane. The protein resides in the cytoplasm. In terms of biological role, cell surface receptor for the cytokine IL10 that participates in IL10-mediated anti-inflammatory functions, limiting excessive tissue disruption caused by inflammation. Upon binding to IL10, induces a conformational change in IL10RB, allowing IL10RB to bind IL10 as well. In turn, the heterotetrameric assembly complex, composed of two subunits of IL10RA and IL10RB, activates the kinases JAK1 and TYK2 that are constitutively associated with IL10RA and IL10RB respectively. These kinases then phosphorylate specific tyrosine residues in the intracellular domain in IL10RA leading to the recruitment and subsequent phosphorylation of STAT3. Once phosphorylated, STAT3 homodimerizes, translocates to the nucleus and activates the expression of anti-inflammatory genes. In addition, IL10RA-mediated activation of STAT3 inhibits starvation-induced autophagy. This is Interleukin-10 receptor subunit alpha (Il10ra) from Mus musculus (Mouse).